The chain runs to 713 residues: Calpastatin (713 aa).

Over residues 1–21 (MSRPGPKPAASSRPRRGAAAS) the composition is skewed to low complexity. The interval 1 to 152 (MSRPGPKPAA…SADGESVAGG (152 aa)) is disordered. Residues 47 to 64 (VTASSAATGTSPRMSTTG) are compositionally biased toward polar residues. Ser57 is modified (phosphoserine). A Glycyl lysine isopeptide (Lys-Gly) (interchain with G-Cter in SUMO2) cross-link involves residue Lys69. At Lys86 the chain carries N6-acetyllysine. The span at 120-129 (SRSNEQIVSE) shows a compositional bias: polar residues. 2 positions are modified to phosphoserine: Ser122 and Ser171. At Thr173 the chain carries Phosphothreonine. One copy of the Inhibitory domain 1 repeat lies at 208–260 (TNKDDPPYTGPVVLDPMDSTYLEALGIKEGTIPPEYRKLLEKNEAITGPLPDS). The tract at residues 253-402 (ITGPLPDSPK…PEETSKCLSE (150 aa)) is disordered. Residues Ser260 and Ser281 each carry the phosphoserine modification. Composition is skewed to polar residues over residues 275–285 (SDFTCSSPTGK), 294–304 (GESSKAQSAGV), and 326–346 (QALQ…QSHL). An Inhibitory domain 2 repeat occupies 341 to 393 (DPQSHLRQAKQVKEAKAKEERQEKCGEDEDTVPAEYRLKPAKDKDGKPLLPEP). Composition is skewed to basic and acidic residues over residues 351–365 (QVKE…QEKC) and 376–387 (YRLKPAKDKDGK). A phosphoserine mark is found at Ser401, Ser403, Ser410, and Ser445. The interval 442-507 (LARSLGTRKE…PLLPKEAEEQ (66 aa)) is disordered. Over residues 448 to 505 (TRKEDPEDEKSLVDKVKEKAKEEDHEKLGEKEETIPPDYRLEIVKDKDGKPLLPKEAE) the composition is skewed to basic and acidic residues. Residues 451-504 (EDPEDEKSLVDKVKEKAKEEDHEKLGEKEETIPPDYRLEIVKDKDGKPLLPKEA) form an Inhibitory domain 3 repeat. Residues Ser521 and Ser532 each carry the phosphoserine modification. Residues 544-558 (VSETVSQVPAPSNHT) are compositionally biased toward polar residues. Residues 544 to 713 (VSETVSQVPA…PKPKVDEDAT (170 aa)) are disordered. Ser580 and Ser582 each carry phosphoserine. The stretch at 588–641 (PDPDENKPLDDKVKEKIKAEHSEKLGERDDTIPPEYRHLLDNDGKDKPEKPLTK) is one Inhibitory domain 4 repeat. Composition is skewed to basic and acidic residues over residues 588 to 648 (PDPD…KLGQ) and 687 to 713 (SKNE…EDAT).

It belongs to the protease inhibitor I27 (calpastatin) family.

Its function is as follows. Specific inhibition of calpain (calcium-dependent cysteine protease). Plays a key role in postmortem tenderization of meat and have been proposed to be involved in muscle protein degradation in living tissue. This Rattus norvegicus (Rat) protein is Calpastatin (Cast).